Consider the following 931-residue polypeptide: 3'-5' exonuclease DinG (931 aa).

An Exonuclease domain is found at 7–162 (VVIDVETTGN…DSDAEVTGLI (156 aa)). In terms of domain architecture, Helicase ATP-binding spans 250–510 (LSELMPGYEK…KKMRQLFQRN (261 aa)). ATP is bound at residue 284 to 291 (APPGIGKT). A DEAH box motif is present at residues 462–465 (DEAH). One can recognise a Helicase C-terminal domain in the interval 741–897 (DTARYIELMA…TIIILDRRIK (157 aa)).

Belongs to the helicase family. DinG subfamily. Type 2 sub-subfamily.

The protein resides in the cytoplasm. Its function is as follows. 3'-5' exonuclease. The sequence is that of 3'-5' exonuclease DinG from Bacillus subtilis (strain 168).